A 725-amino-acid chain; its full sequence is Serine/threonine-protein kinase TBK1 (725 aa).

In terms of domain architecture, Protein kinase spans 9–306; the sequence is WMLSDILGQG…QFFAVTNDIF (298 aa). ATP contacts are provided by residues 15-23 and Lys-38; that span reads LGQGATANV. Asp-135 functions as the Proton acceptor in the catalytic mechanism. The Ubiquitin-like domain maps to 309-385; that stretch reads IVVHVFSLQQ…ENPIFVLTRE (77 aa). The stretch at 635–709 forms a coiled coil; it reads DIEEEASKCQ…LEENNHILER (75 aa).

It belongs to the protein kinase superfamily. Ser/Thr protein kinase family. I-kappa-B kinase subfamily. As to quaternary structure, homodimer.

It localises to the cytoplasm. It catalyses the reaction L-seryl-[protein] + ATP = O-phospho-L-seryl-[protein] + ADP + H(+). It carries out the reaction L-threonyl-[protein] + ATP = O-phospho-L-threonyl-[protein] + ADP + H(+). Serine/threonine kinase that plays an essential role in regulating inflammatory responses to foreign agents. Following activation of toll-like receptors by viral or bacterial components, associates with traf3 and tank and phosphorylates interferon regulatory factors (IRFs) irf3 and irf7 as well as ddx3x. This activity allows subsequent homodimerization and nuclear translocation of the IRFs leading to transcriptional activation of pro-inflammatory and antiviral genes including ifna and ifnb. In order to establish such an antiviral state, TBK1 form several different complexes whose composition depends on the type of cell and cellular stimuli. The chain is Serine/threonine-protein kinase TBK1 (tbk1) from Xenopus laevis (African clawed frog).